The following is a 322-amino-acid chain: tRNA-specific adenosine deaminase subunit TAD3 (322 aa).

Positions 162-283 (EVRNELSRAS…EMQRTGSLKL (122 aa)) constitute a CMP/dCMP-type deaminase domain. His-216, Cys-254, Cys-257, and Cys-322 together coordinate Zn(2+).

This sequence belongs to the cytidine and deoxycytidylate deaminase family. ADAT3 subfamily. Heterodimer with TAD2.

The protein resides in the cytoplasm. Its subcellular location is the nucleus. The protein localises to the peroxisome. In terms of biological role, structural subunit of tRNA-specific adenosine deaminase, which deaminates adenosine-34 (the first, also called wobble position of the anticodon) to inosine in many tRNAs. Inosine-34 allows the decoding of 3 different nucleotides at the third position of mRNA codons, as inosine is able to pair with U, C, and A. The polypeptide is tRNA-specific adenosine deaminase subunit TAD3 (TAD3) (Saccharomyces cerevisiae (strain ATCC 204508 / S288c) (Baker's yeast)).